The chain runs to 333 residues: Diaminopimelate epimerase (333 aa).

The substrate site is built by Asn-24 and Asn-79. The active-site Proton donor is the Cys-88. Residues 89 to 90, Asn-176, Asn-210, and 228 to 229 each bind substrate; these read GN and ER. Cys-237 serves as the catalytic Proton acceptor. 238–239 is a substrate binding site; sequence GT.

This sequence belongs to the diaminopimelate epimerase family. In terms of assembly, homodimer.

The protein resides in the cytoplasm. It carries out the reaction (2S,6S)-2,6-diaminopimelate = meso-2,6-diaminopimelate. It functions in the pathway amino-acid biosynthesis; L-lysine biosynthesis via DAP pathway; DL-2,6-diaminopimelate from LL-2,6-diaminopimelate: step 1/1. Its function is as follows. Catalyzes the stereoinversion of LL-2,6-diaminopimelate (L,L-DAP) to meso-diaminopimelate (meso-DAP), a precursor of L-lysine and an essential component of the bacterial peptidoglycan. This is Diaminopimelate epimerase from Clostridium acetobutylicum (strain ATCC 824 / DSM 792 / JCM 1419 / IAM 19013 / LMG 5710 / NBRC 13948 / NRRL B-527 / VKM B-1787 / 2291 / W).